The sequence spans 1129 residues: Inositol hexakisphosphate and diphosphoinositol-pentakisphosphate kinase 2 (1129 aa).

The residue at position 44 (Ser44) is a Phosphoserine. Residue Lys59–Lys60 coordinates substrate. ATP is bound by residues Arg140, Lys193, His200, and Arg219. Arg219 to Lys220 contributes to the substrate binding site. Ser229 carries the post-translational modification Phosphoserine. Residues Glu243–Met246 and Asp252–Lys254 contribute to the ATP site. Substrate contacts are provided by Lys254 and Arg268. Residues Ser270, Asp315, and Asp327–Asn329 each bind ATP. Ser332–Lys335 provides a ligand contact to substrate. Residues Pro377 to Met448 form a polyphosphoinositide-binding domain region. The tract at residues Lys904–Glu945 is disordered. Over residues Ala921–Glu945 the composition is skewed to basic and acidic residues. 3 positions are modified to phosphoserine: Ser1051, Ser1058, and Ser1066. Positions Tyr1070–Arg1129 are disordered. The segment covering Ala1081 to Ser1098 has biased composition (low complexity). Residues Ser1106 and Ser1107 each carry the phosphoserine modification.

It belongs to the histidine acid phosphatase family. VIP1 subfamily. Ubiquitously expressed. Expressed in the cochlear and vestibular sensory hair cells, supporting cells and spiral ganglion neurons.

The protein resides in the cytoplasm. The protein localises to the cytosol. The catalysed reaction is 1D-myo-inositol hexakisphosphate + ATP = 1-diphospho-1D-myo-inositol 2,3,4,5,6-pentakisphosphate + ADP. The enzyme catalyses 5-diphospho-1D-myo-inositol 1,2,3,4,6-pentakisphosphate + ATP + H(+) = 1,5-bis(diphospho)-1D-myo-inositol 2,3,4,6-tetrakisphosphate + ADP. In terms of biological role, bifunctional inositol kinase that acts in concert with the IP6K kinases IP6K1, IP6K2 and IP6K3 to synthesize the diphosphate group-containing inositol pyrophosphates diphosphoinositol pentakisphosphate, PP-InsP5, and bis-diphosphoinositol tetrakisphosphate, (PP)2-InsP4. PP-InsP5 and (PP)2-InsP4, also respectively called InsP7 and InsP8, regulate a variety of cellular processes, including apoptosis, vesicle trafficking, cytoskeletal dynamics, exocytosis, insulin signaling and neutrophil activation. Phosphorylates inositol hexakisphosphate (InsP6) at position 1 to produce PP-InsP5 which is in turn phosphorylated by IP6Ks to produce (PP)2-InsP4. Alternatively, phosphorylates PP-InsP5 at position 1, produced by IP6Ks from InsP6, to produce (PP)2-InsP4. Required for normal hearing. This Mus musculus (Mouse) protein is Inositol hexakisphosphate and diphosphoinositol-pentakisphosphate kinase 2.